The primary structure comprises 304 residues: Cbb3-type cytochrome c oxidase subunit CcoP (304 aa).

The next 2 helical transmembrane spans lie at 11–31 (LYVA…LIVA) and 61–81 (WWAG…ALYP). 2 consecutive Cytochrome c domains span residues 129 to 209 (QAMA…LSLS) and 216 to 296 (VAAQ…WSLS). Heme c contacts are provided by Cys142, Cys145, His146, Met185, Cys228, Cys231, His232, and Met273.

This sequence belongs to the CcoP / FixP family. Component of the cbb3-type cytochrome c oxidase at least composed of CcoN, CcoO, CcoQ and CcoP. Heme c serves as cofactor.

It localises to the cell inner membrane. Its pathway is energy metabolism; oxidative phosphorylation. Functionally, C-type cytochrome. Part of the cbb3-type cytochrome c oxidase complex. CcoP subunit is required for transferring electrons from donor cytochrome c via its heme groups to CcoO subunit. From there, electrons are shuttled to the catalytic binuclear center of CcoN subunit where oxygen reduction takes place. The complex also functions as a proton pump. This Rubrivivax gelatinosus (Rhodocyclus gelatinosus) protein is Cbb3-type cytochrome c oxidase subunit CcoP.